The chain runs to 366 residues: Aminomethyltransferase (366 aa).

The protein belongs to the GcvT family. In terms of assembly, the glycine cleavage system is composed of four proteins: P, T, L and H.

The catalysed reaction is N(6)-[(R)-S(8)-aminomethyldihydrolipoyl]-L-lysyl-[protein] + (6S)-5,6,7,8-tetrahydrofolate = N(6)-[(R)-dihydrolipoyl]-L-lysyl-[protein] + (6R)-5,10-methylene-5,6,7,8-tetrahydrofolate + NH4(+). The glycine cleavage system catalyzes the degradation of glycine. The chain is Aminomethyltransferase from Moorella thermoacetica (strain ATCC 39073 / JCM 9320).